The chain runs to 179 residues: Adaptation to cold protein A (179 aa).

Positions 133 to 179 are disordered; that stretch reads KATPAPKRSADDDFEDEDSDYADYSDDDDDEGEEEDGYYDHYDDEDR. A compositionally biased stretch (acidic residues) spans 144–179; the sequence is DDFEDEDSDYADYSDDDDDEGEEEDGYYDHYDDEDR.

In terms of biological role, part of an operon involved in cold adaptation. This chain is Adaptation to cold protein A, found in Shewanella oneidensis (strain ATCC 700550 / JCM 31522 / CIP 106686 / LMG 19005 / NCIMB 14063 / MR-1).